The primary structure comprises 137 residues: Protein archease (137 aa).

Positions 11, 136, and 137 each coordinate Ca(2+).

It belongs to the archease family.

Activates the tRNA-splicing ligase complex by facilitating the enzymatic turnover of catalytic subunit RtcB. Acts by promoting the guanylylation of RtcB, a key intermediate step in tRNA ligation. Can also alter the NTP specificity of RtcB such that ATP, dGTP or ITP is used efficiently. The chain is Protein archease from Archaeoglobus fulgidus (strain ATCC 49558 / DSM 4304 / JCM 9628 / NBRC 100126 / VC-16).